Consider the following 146-residue polypeptide: Hemoglobin subunit beta-2 (146 aa).

The 145-residue stretch at 2–146 folds into the Globin domain; it reads KWTDKERAVI…VVSALGKQYC (145 aa). Heme b is bound by residues His63 and His92.

The protein belongs to the globin family. Heterotetramer of two alpha chains and two beta chains. In terms of tissue distribution, red blood cells.

Involved in oxygen transport from gills to the various peripheral tissues. In Lycodes reticulatus (Arctic eelpout), this protein is Hemoglobin subunit beta-2 (hbb2).